An 88-amino-acid polypeptide reads, in one-letter code: Phosphocarrier protein HPr (88 aa).

The HPr domain occupies 2 to 88 (AQKTFKVTAD…ETMKSEGLGE (87 aa)). Residue Ser-12 is modified to Phosphoserine. His-15 serves as the catalytic Pros-phosphohistidine intermediate; alternate. His-15 is modified (tele-phosphohistidine; alternate). A Phosphoserine; by HPrK/P modification is found at Ser-46.

Belongs to the HPr family. Post-translationally, phosphorylated during sporulation.

The protein resides in the cytoplasm. With respect to regulation, phosphorylation on Ser-46 inhibits the phosphoryl transfer from enzyme I to HPr. Functionally, general (non sugar-specific) component of the phosphoenolpyruvate-dependent sugar phosphotransferase system (sugar PTS). This major carbohydrate active-transport system catalyzes the phosphorylation of incoming sugar substrates concomitantly with their translocation across the cell membrane. The phosphoryl group from phosphoenolpyruvate (PEP) is transferred to the phosphoryl carrier protein HPr by enzyme I. Phospho-HPr then transfers it to the PTS EIIA domain. In terms of biological role, P-Ser-HPr interacts with the catabolite control protein A (CcpA), forming a complex that binds to DNA at the catabolite response elements cre, operator sites preceding a large number of catabolite-regulated genes. Thus, P-Ser-HPr is a corepressor in carbon catabolite repression (CCR), a mechanism that allows bacteria to coordinate and optimize the utilization of available carbon sources. P-Ser-HPr also plays a role in inducer exclusion, in which it probably interacts with several non-PTS permeases and inhibits their transport activity. The sequence is that of Phosphocarrier protein HPr (ptsH) from Bacillus subtilis (strain 168).